The chain runs to 172 residues: Translation initiation factor IF-3 (172 aa).

This sequence belongs to the IF-3 family. In terms of assembly, monomer.

It is found in the cytoplasm. Its function is as follows. IF-3 binds to the 30S ribosomal subunit and shifts the equilibrium between 70S ribosomes and their 50S and 30S subunits in favor of the free subunits, thus enhancing the availability of 30S subunits on which protein synthesis initiation begins. This chain is Translation initiation factor IF-3, found in Lactobacillus johnsonii (strain CNCM I-12250 / La1 / NCC 533).